Reading from the N-terminus, the 138-residue chain is Isochorismatase-like protein asqB (138 aa).

The protein belongs to the isochorismatase family.

The enzyme catalyses [(1'E)-5'-(3',3'-dimethyloxiran-2'-yl)-3'-hydroxy-3'-methylpent-1'-en-1'-yl]-quinolinone B = yaequinolone C. The protein operates within secondary metabolite biosynthesis. It participates in alkaloid biosynthesis. It functions in the pathway mycotoxin biosynthesis. Isochorismatase-like protein; part of the gene cluster that mediates the biosynthesis of the aspoquinolone mycotoxins. Within the pathway, asqB converts [(1'E)-5'-(3',3'-dimethyloxiran-2'-yl)-3'-hydroxy-3'-methylpent-1'-en-1'-yl]-quinolinone B into yaequinolone C. The first step of the pathway is catalyzed by the nonribosomal peptide synthetase asqK that condenses anthranilic acid and O-methyl-L-tyrosine to produce 4'-methoxycyclopeptin. 4'-methoxycyclopeptin is then converted to 4'-methoxydehydrocyclopeptin by the ketoglutarate-dependent dioxygenase asqJ. AsqJ also converts its first product 4'-methoxydehydrocyclopeptin to 4'-methoxycyclopenin. The following conversion of 4'-methoxycyclopenin into 4'-methoxyviridicatin is catalyzed by the cyclopenase asqI. 4'-methoxyviridicatin is the precursor of quinolone natural products, and is further converted to quinolinone B. The prenyltransferase asqH1 then catalyzes the canonical Friedel-Crafts alkylation of quinolinone B with dimethylallyl cation to yield dimethylallyl quinolone, which is subjected to FAD-dependent dehydrogenation by the FAD-linked oxidoreductase asqF to yield conjugated aryl diene. The delta(3') double bond then serves as the site of the second alkylation with DMAPP catalyzed by the prenyltransferase asqH2 to yield a carbenium ion intermediate, which can be attacked by H(2)O to yield a styrenyl quinolone containing a C3'-hydroxyprenyl chain. The FAD-dependent monooxygenase asqG performs epoxidation of the terminal C7'-C8' olefin. Finally, after dehydratation of the epoxide at C3 by asqC, the quinolone epoxide rearrangement protein asqO catalyzes an enzymatic 3-exo-tet cyclization to yield the cyclopropyl-THF ring system in aspoquinolone. The polypeptide is Isochorismatase-like protein asqB (Emericella nidulans (strain FGSC A4 / ATCC 38163 / CBS 112.46 / NRRL 194 / M139) (Aspergillus nidulans)).